Here is a 338-residue protein sequence, read N- to C-terminus: MDPETRGQEIIKVTPLQQMLASCTGAILTSVIVTPLDVVKIRLQAQNNPLPKGKCFVYSNGLMDHLCVCEEGGNKLWYKKPGNFQGTLDAFFKIIRNEGIKSLWSGLPPTLVMAVPATVIYFTCYDQLSALLRSKLGENETCIPIVAGIVARFGAVTVISPLELIRTKMQSKKFSYVELHRFVSKKVSEDGWISLWRGWAPTVLRDVPFSAMYWYNYEILKKWLCEKSGLYEPTFMINFTSGALSGSFAAVATLPFDVVKTQKQTQLWTYESHKISMPLHMSTWIIMKNIVAKNGFSGLFSGLIPRLIKIAPACAIMISTYEFGKAFFQKQNVRRQQY.

3 Solcar repeats span residues 13–131 (VTPL…LSAL), 139–223 (NETC…LKKW), and 233–327 (PTFM…GKAF). Transmembrane regions (helical) follow at residues 19–39 (MLAS…LDVV), 103–123 (LWSG…IYFT), 142–162 (CIPI…ISPL), 199–220 (WAPT…YEIL), 239–259 (FTSG…FDVV), and 298–318 (GLFS…AIMI).

Belongs to the mitochondrial carrier (TC 2.A.29) family.

The protein localises to the mitochondrion inner membrane. It carries out the reaction glutathione(in) = glutathione(out). Its function is as follows. Probable mitochondrial transporter required for glutathione import into mitochondria. Glutathione, which plays key roles in oxidative metabolism, is produced exclusively in the cytosol and is imported in many organelles. Mitochondrial glutathione is required for the activity and stability of proteins containing iron-sulfur clusters, as well as erythropoiesis. This chain is Mitochondrial glutathione transporter SLC25A40, found in Homo sapiens (Human).